The following is a 491-amino-acid chain: Probable protein phosphatase 2C 52 (491 aa).

Residues 1-11 show a composition bias toward basic and acidic residues; that stretch reads MVYDGAVKDQE. A disordered region spans residues 1–211; the sequence is MVYDGAVKDQ…REREKERERV (211 aa). Low complexity predominate over residues 12–54; sequence SSANPASASAALSEASAAASEVTAAAAAGAGAGAAEEGAAVSG. The span at 66-78 shows a compositional bias: basic residues; it reads GVRHPLKHRRFRA. Acidic residues predominate over residues 95–105; it reads VADEEASEVEQ. Residues 187–211 show a composition bias toward basic and acidic residues; that stretch reads VEEKKHKDQENKHKEREREKERERV. Positions 229–475 constitute a PPM-type phosphatase domain; sequence SCGYSSFRGK…DNITCIVVKF (247 aa). Mn(2+) is bound by residues D265, G266, D427, and D466.

The protein belongs to the PP2C family. The cofactor is Mg(2+). It depends on Mn(2+) as a cofactor.

It catalyses the reaction O-phospho-L-seryl-[protein] + H2O = L-seryl-[protein] + phosphate. It carries out the reaction O-phospho-L-threonyl-[protein] + H2O = L-threonyl-[protein] + phosphate. The polypeptide is Probable protein phosphatase 2C 52 (Oryza sativa subsp. japonica (Rice)).